The following is a 613-amino-acid chain: MITKVSGFLFRTFREDPATTESRGYGFLLRAGYIRQTGSGIFSWMPLGLKVRHKIENIIRYEMGQVNAIEVLFPALFSADLFKQSGRWSEYGDDIFRLKDRRQGDYLLAPTHEEAFTQMMKEICTSYRDLPRTVYQIQDKYRDELRPRAGLLRSREFSMKDAYSFDLDEKGLRQSYEAQKRAYKKIFDRLKIDYVIVKANAGAMGGSVSEEFLHPTEMGDDTFVVTADGSAFNAEVYVTPPGPAIDYSNAPEAEDCETPGVISIPDLVNHMNSSGRFIGRVIESSDCLKCLLFRIEYAEVQNGNPSNLVVKKILERGFEYIGFLVPGDRNVDLKRAQVALSPLTIEPADNRVFECNPSFVRGSIGPGLSGVFYCADPRVSLGSSWIIGANRPGVHRIGAIAGRDFSFDCTLDVSSIKTGDKSEWGPVTVKRGIEIGHLFQLGLKYSNALGLKVLDKDGYNKAVFMGSYGIGVSRLFALIAEKNCDERGLKWPAVLAPFDLHVVLLSSARAELIDSLTDCGLDVLVDDRRVSPGVKFTDAQLIGVPKIIVIGDKTRGEDVEVWDRANDQRTVLPLKEMIQGVIQGVIQGVIQGVIQGGDTGGDTGGDTGGCTER.

It belongs to the class-II aminoacyl-tRNA synthetase family. ProS type 1 subfamily. As to quaternary structure, homodimer.

The protein resides in the cytoplasm. It carries out the reaction tRNA(Pro) + L-proline + ATP = L-prolyl-tRNA(Pro) + AMP + diphosphate. Functionally, catalyzes the attachment of proline to tRNA(Pro) in a two-step reaction: proline is first activated by ATP to form Pro-AMP and then transferred to the acceptor end of tRNA(Pro). As ProRS can inadvertently accommodate and process non-cognate amino acids such as alanine and cysteine, to avoid such errors it has two additional distinct editing activities against alanine. One activity is designated as 'pretransfer' editing and involves the tRNA(Pro)-independent hydrolysis of activated Ala-AMP. The other activity is designated 'posttransfer' editing and involves deacylation of mischarged Ala-tRNA(Pro). The misacylated Cys-tRNA(Pro) is not edited by ProRS. The sequence is that of Proline--tRNA ligase from Tropheryma whipplei (strain Twist) (Whipple's bacillus).